The primary structure comprises 152 residues: UPF0266 membrane protein YobD (152 aa).

3 helical membrane passes run leucine 6–methionine 26, valine 45–histidine 65, and alanine 67–isoleucine 87.

It belongs to the UPF0266 family.

Its subcellular location is the cell inner membrane. The sequence is that of UPF0266 membrane protein YobD from Salmonella newport (strain SL254).